A 299-amino-acid chain; its full sequence is Diphthine methyl ester synthase 1 (299 aa).

Residues Leu-9, Asp-85, Gly-88, 113-114 (SV), Leu-164, Leu-222, and His-247 each bind S-adenosyl-L-methionine.

This sequence belongs to the diphthine synthase family.

Its subcellular location is the cytoplasm. It carries out the reaction 2-[(3S)-amino-3-carboxypropyl]-L-histidyl-[translation elongation factor 2] + 4 S-adenosyl-L-methionine = diphthine methyl ester-[translation elongation factor 2] + 4 S-adenosyl-L-homocysteine + 3 H(+). It functions in the pathway protein modification; peptidyl-diphthamide biosynthesis. S-adenosyl-L-methionine-dependent methyltransferase that catalyzes four methylations of the modified target histidine residue in translation elongation factor 2 (EF-2), to form an intermediate called diphthine methyl ester. The four successive methylation reactions represent the second step of diphthamide biosynthesis. This chain is Diphthine methyl ester synthase 1 (DPH5), found in Candida albicans (strain SC5314 / ATCC MYA-2876) (Yeast).